A 604-amino-acid chain; its full sequence is Deuterosome assembly protein 1 (604 aa).

4 coiled-coil regions span residues Cys14 to Thr59, Met85 to Gln197, Ile226 to Ser278, and Gln336 to Lys399. At Ser547 the chain carries Phosphoserine. Residues Ala558–Asn601 are a coiled coil.

It belongs to the CEP63 family. Interacts with CEP152; the interaction is mutually exclusive with CEP63.

The protein resides in the cytoplasm. Its function is as follows. Key structural component of the deuterosome, a structure that promotes de novo centriole amplification in multiciliated cells. Deuterosome-mediated centriole amplification occurs in terminally differentiated multiciliated cells and can generate more than 100 centrioles. Probably sufficient for the specification and formation of the deuterosome inner core. Interacts with CEP152 and recruits PLK4 to activate centriole biogenesis. In Homo sapiens (Human), this protein is Deuterosome assembly protein 1.